A 69-amino-acid polypeptide reads, in one-letter code: Cold shock-like protein CspE (69 aa).

Residues 6 to 66 (GNVKWFNESK…GAKGPSAANV (61 aa)) form the CSD domain.

The protein resides in the cytoplasm. This is Cold shock-like protein CspE (cspE) from Buchnera aphidicola subsp. Acyrthosiphon pisum (strain APS) (Acyrthosiphon pisum symbiotic bacterium).